A 421-amino-acid chain; its full sequence is BEN domain-containing protein 5 (421 aa).

Lysine 133 bears the N6-acetyllysine mark. The stretch at 180-243 forms a coiled coil; the sequence is RALYEELLRN…LNRRLQDVLL (64 aa). Lysine 258 participates in a covalent cross-link: Glycyl lysine isopeptide (Lys-Gly) (interchain with G-Cter in SUMO2). The region spanning 302 to 408 is the BEN domain; the sequence is GSGIWVDEEK…EKIMDINKSC (107 aa).

Acts as a transcriptional repressor. This chain is BEN domain-containing protein 5 (BEND5), found in Homo sapiens (Human).